The following is a 185-amino-acid chain: Large ribosomal subunit protein uL22 (185 aa).

Belongs to the universal ribosomal protein uL22 family. In terms of assembly, part of the 50S ribosomal subunit.

Its function is as follows. This protein binds specifically to 23S rRNA. It makes multiple contacts with different domains of the 23S rRNA in the assembled 50S subunit and ribosome. Functionally, the globular domain of the protein is located near the polypeptide exit tunnel on the outside of the subunit, while an extended beta-hairpin is found that lines the wall of the exit tunnel in the center of the 70S ribosome. The protein is Large ribosomal subunit protein uL22 of Pyrobaculum islandicum (strain DSM 4184 / JCM 9189 / GEO3).